The sequence spans 146 residues: Large ribosomal subunit protein uL15 (146 aa).

Residues 1-66 (MKLHELKPAP…LQRRMPKRGF (66 aa)) form a disordered region. Composition is skewed to gly residues over residues 21 to 31 (QGIGSGMGKTA) and 42 to 52 (SGGGVRPGFEG).

The protein belongs to the universal ribosomal protein uL15 family. Part of the 50S ribosomal subunit.

Functionally, binds to the 23S rRNA. This Pelotomaculum thermopropionicum (strain DSM 13744 / JCM 10971 / SI) protein is Large ribosomal subunit protein uL15.